Consider the following 248-residue polypeptide: Secreted and transmembrane protein 1 (248 aa).

The signal sequence occupies residues 1–28 (MQTCPLAFPGHVSQALGTLLFLAASLSA). Topologically, residues 29 to 145 (QNEGWDSPIC…AEPQSAPDTG (117 aa)) are extracellular. Cys-38 and Cys-55 are oxidised to a cystine. Asn-56 carries an N-linked (GlcNAc...) asparagine glycan. The chain crosses the membrane as a helical span at residues 146–166 (FWPVPAVVTAVFILLVALVMF). Residues 167 to 248 (AWYRCRCSQQ…QPLFPYAADP (82 aa)) are Cytoplasmic-facing.

Belongs to the SECTM family. As to quaternary structure, interacts with CD7. In terms of tissue distribution, detected at the highest levels in peripheral blood leukocytes and breast cancer cell lines. Found in leukocytes of the myeloid lineage, with the strongest expression observed in granulocytes and no detectable expression in lymphocytes. Expressed in thymic epithelial cells and fibroblasts.

The protein resides in the cell membrane. The protein localises to the secreted. Its function is as follows. May be involved in thymocyte signaling. The polypeptide is Secreted and transmembrane protein 1 (SECTM1) (Homo sapiens (Human)).